Here is a 298-residue protein sequence, read N- to C-terminus: KH domain-containing protein At1g09660/At1g09670 (298 aa).

A KH domain is found at 152-219 (DVPVDKYPSY…EHLCEPLHVL (68 aa)). The segment at 266-298 (NGTLREESPSPSLSPCLSPSMSPFNSKRAKTEI) is disordered. A phosphoserine mark is found at Ser273 and Ser287. Residues 274 to 288 (PSPSLSPCLSPSMSP) are compositionally biased toward low complexity.

The protein localises to the nucleus. The polypeptide is KH domain-containing protein At1g09660/At1g09670 (Arabidopsis thaliana (Mouse-ear cress)).